The chain runs to 197 residues: Holliday junction branch migration complex subunit RuvA (197 aa).

A domain I region spans residues 1–63 (MIALLNGQLI…EDALLLFGFL (63 aa)). The segment at 64 to 142 (TETEKDLFGL…PVQAVPGNAP (79 aa)) is domain II. The segment at 142–146 (PLPAE) is flexible linker. A domain III region spans residues 147-197 (TAGDLREDALSALVNLGYKENLSRKALDGIDTAPDAPLEDILKQALKLLMR).

This sequence belongs to the RuvA family. In terms of assembly, homotetramer. Forms an RuvA(8)-RuvB(12)-Holliday junction (HJ) complex. HJ DNA is sandwiched between 2 RuvA tetramers; dsDNA enters through RuvA and exits via RuvB. An RuvB hexamer assembles on each DNA strand where it exits the tetramer. Each RuvB hexamer is contacted by two RuvA subunits (via domain III) on 2 adjacent RuvB subunits; this complex drives branch migration. In the full resolvosome a probable DNA-RuvA(4)-RuvB(12)-RuvC(2) complex forms which resolves the HJ.

It localises to the cytoplasm. Its function is as follows. The RuvA-RuvB-RuvC complex processes Holliday junction (HJ) DNA during genetic recombination and DNA repair, while the RuvA-RuvB complex plays an important role in the rescue of blocked DNA replication forks via replication fork reversal (RFR). RuvA specifically binds to HJ cruciform DNA, conferring on it an open structure. The RuvB hexamer acts as an ATP-dependent pump, pulling dsDNA into and through the RuvAB complex. HJ branch migration allows RuvC to scan DNA until it finds its consensus sequence, where it cleaves and resolves the cruciform DNA. The polypeptide is Holliday junction branch migration complex subunit RuvA (Syntrophotalea carbinolica (strain DSM 2380 / NBRC 103641 / GraBd1) (Pelobacter carbinolicus)).